The chain runs to 454 residues: Glycosyl hydrolase family 109 protein (454 aa).

Positions 1–29 form a signal peptide, tat-type signal; the sequence is MFAMKRREFIAASAAVAASSLLPQTPAWA. Residues 43-44, Asp-65, 116-119, 136-137, and Asn-165 each bind NAD(+); these read MR, WEYH, and EV. A substrate-binding site is contributed by Tyr-194. Residue 224–228 coordinates NAD(+); it reads SEARW. Substrate contacts are provided by residues Arg-229, 241-244, and Tyr-324; that span reads YPSH. Tyr-241 provides a ligand contact to NAD(+).

This sequence belongs to the Gfo/Idh/MocA family. Glycosyl hydrolase 109 subfamily. The cofactor is NAD(+). Predicted to be exported by the Tat system. The position of the signal peptide cleavage has not been experimentally proven.

In terms of biological role, glycosidase. In Stenotrophomonas maltophilia (strain K279a), this protein is Glycosyl hydrolase family 109 protein.